Here is a 307-residue protein sequence, read N- to C-terminus: Pantothenate kinase (307 aa).

87–94 (GSVAVGKS) provides a ligand contact to ATP.

The protein belongs to the prokaryotic pantothenate kinase family.

The protein resides in the cytoplasm. It catalyses the reaction (R)-pantothenate + ATP = (R)-4'-phosphopantothenate + ADP + H(+). Its pathway is cofactor biosynthesis; coenzyme A biosynthesis; CoA from (R)-pantothenate: step 1/5. The polypeptide is Pantothenate kinase (Vibrio vulnificus (strain CMCP6)).